We begin with the raw amino-acid sequence, 157 residues long: Mediator of RNA polymerase II transcription subunit 22 (157 aa).

This sequence belongs to the Mediator complex subunit 22 family. Component of the Mediator complex.

It localises to the nucleus. In terms of biological role, component of the Mediator complex, a coactivator involved in the regulated transcription of nearly all RNA polymerase II-dependent genes. Mediator functions as a bridge to convey information from gene-specific regulatory proteins to the basal RNA polymerase II transcription machinery. Mediator is recruited to promoters by direct interactions with regulatory proteins and serves as a scaffold for the assembly of a functional preinitiation complex with RNA polymerase II and the general transcription factors. This is Mediator of RNA polymerase II transcription subunit 22 (mdt-22) from Caenorhabditis elegans.